The following is a 242-amino-acid chain: ADP-dependent L-serine kinase SerK (242 aa).

Glu-30 is an active-site residue. ADP contacts are provided by Ser-43, Ile-49, Trp-51, and Lys-52. Val-68 contacts O-phospho-L-serine. ADP is bound by residues Asp-69, Gly-70, His-71, His-72, and Arg-73. Residue Asp-69 participates in Mg(2+) binding. O-phospho-L-serine contacts are provided by Gly-70, His-71, and His-72. The O-phospho-L-serine site is built by Trp-102, Lys-221, Thr-223, and His-225.

It belongs to the SerK family. Mg(2+) serves as cofactor.

It carries out the reaction L-serine + ADP = O-phospho-L-serine + AMP + H(+). It participates in amino-acid biosynthesis; L-cysteine biosynthesis; L-cysteine from L-serine: step 1/2. In terms of biological role, free serine kinase that uses ADP to phosphorylate L-serine to yield O-phospho-L-serine and AMP. The polypeptide is ADP-dependent L-serine kinase SerK (Thermococcus kodakarensis (strain ATCC BAA-918 / JCM 12380 / KOD1) (Pyrococcus kodakaraensis (strain KOD1))).